The primary structure comprises 362 residues: UDP-N-acetylglucosamine--N-acetylmuramyl-(pentapeptide) pyrophosphoryl-undecaprenol N-acetylglucosamine transferase (362 aa).

UDP-N-acetyl-alpha-D-glucosamine contacts are provided by residues 11 to 13 (TGG), asparagine 124, arginine 163, serine 191, isoleucine 246, and glutamine 291.

The protein belongs to the glycosyltransferase 28 family. MurG subfamily.

It is found in the cell inner membrane. The enzyme catalyses di-trans,octa-cis-undecaprenyl diphospho-N-acetyl-alpha-D-muramoyl-L-alanyl-D-glutamyl-meso-2,6-diaminopimeloyl-D-alanyl-D-alanine + UDP-N-acetyl-alpha-D-glucosamine = di-trans,octa-cis-undecaprenyl diphospho-[N-acetyl-alpha-D-glucosaminyl-(1-&gt;4)]-N-acetyl-alpha-D-muramoyl-L-alanyl-D-glutamyl-meso-2,6-diaminopimeloyl-D-alanyl-D-alanine + UDP + H(+). Its pathway is cell wall biogenesis; peptidoglycan biosynthesis. Functionally, cell wall formation. Catalyzes the transfer of a GlcNAc subunit on undecaprenyl-pyrophosphoryl-MurNAc-pentapeptide (lipid intermediate I) to form undecaprenyl-pyrophosphoryl-MurNAc-(pentapeptide)GlcNAc (lipid intermediate II). In Idiomarina loihiensis (strain ATCC BAA-735 / DSM 15497 / L2-TR), this protein is UDP-N-acetylglucosamine--N-acetylmuramyl-(pentapeptide) pyrophosphoryl-undecaprenol N-acetylglucosamine transferase.